The primary structure comprises 161 residues: MKFFAVLALCIVGAIASPLTADEASLVQSSWKAVSHNEVEILAAVFAAYPDIQNKFSQFAGKDLASIKDTGAFATHATRIVSFLSEVIALSGNDSNAAAVNSLVSKLGDDHKARGVSAAQFGEFRTALVAYLQANVSWGDNVAAAWNKALDNTFAIVVPRL.

The first 16 residues, 1 to 16 (MKFFAVLALCIVGAIA), serve as a signal peptide directing secretion. The 144-residue stretch at 18 to 161 (PLTADEASLV…NTFAIVVPRL (144 aa)) folds into the Globin domain. His-76 and His-111 together coordinate heme b.

The protein belongs to the globin family. In terms of assembly, homodimer.

In Chironomus thummi thummi (Midge), this protein is Globin CTT-VIIB-6 (CTT-7B6).